Consider the following 70-residue polypeptide: uncharacterized protein (70 aa).

This is an uncharacterized protein from Thermoproteus tenax virus 1 (strain KRA1) (TTV1).